Here is a 271-residue protein sequence, read N- to C-terminus: Formamidopyrimidine-DNA glycosylase (271 aa).

Pro2 (schiff-base intermediate with DNA) is an active-site residue. Catalysis depends on Glu3, which acts as the Proton donor. Lys56 serves as the catalytic Proton donor; for beta-elimination activity. The DNA site is built by His89, Arg107, and Lys151. The FPG-type zinc finger occupies 236–270; the sequence is NVYGRAGLPCRQCGTPVRLLRQGQRSTYFCPHCQR. Arg260 serves as the catalytic Proton donor; for delta-elimination activity.

This sequence belongs to the FPG family. Monomer. Zn(2+) serves as cofactor.

The enzyme catalyses Hydrolysis of DNA containing ring-opened 7-methylguanine residues, releasing 2,6-diamino-4-hydroxy-5-(N-methyl)formamidopyrimidine.. It carries out the reaction 2'-deoxyribonucleotide-(2'-deoxyribose 5'-phosphate)-2'-deoxyribonucleotide-DNA = a 3'-end 2'-deoxyribonucleotide-(2,3-dehydro-2,3-deoxyribose 5'-phosphate)-DNA + a 5'-end 5'-phospho-2'-deoxyribonucleoside-DNA + H(+). Its function is as follows. Involved in base excision repair of DNA damaged by oxidation or by mutagenic agents. Acts as a DNA glycosylase that recognizes and removes damaged bases. Has a preference for oxidized purines, such as 7,8-dihydro-8-oxoguanine (8-oxoG). Has AP (apurinic/apyrimidinic) lyase activity and introduces nicks in the DNA strand. Cleaves the DNA backbone by beta-delta elimination to generate a single-strand break at the site of the removed base with both 3'- and 5'-phosphates. The protein is Formamidopyrimidine-DNA glycosylase of Acidovorax sp. (strain JS42).